The following is a 335-amino-acid chain: Glycerol-3-phosphate dehydrogenase [NAD(P)+] (335 aa).

The NADPH site is built by Trp14, Arg33, and Lys111. Sn-glycerol 3-phosphate-binding residues include Lys111, Gly140, and Ser142. Ala144 contacts NADPH. Residues Lys195, Asp248, Ser258, Arg259, and Asn260 each contribute to the sn-glycerol 3-phosphate site. Catalysis depends on Lys195, which acts as the Proton acceptor. Arg259 serves as a coordination point for NADPH. 2 residues coordinate NADPH: Val283 and Glu285.

This sequence belongs to the NAD-dependent glycerol-3-phosphate dehydrogenase family.

Its subcellular location is the cytoplasm. The catalysed reaction is sn-glycerol 3-phosphate + NAD(+) = dihydroxyacetone phosphate + NADH + H(+). It carries out the reaction sn-glycerol 3-phosphate + NADP(+) = dihydroxyacetone phosphate + NADPH + H(+). The protein operates within membrane lipid metabolism; glycerophospholipid metabolism. Functionally, catalyzes the reduction of the glycolytic intermediate dihydroxyacetone phosphate (DHAP) to sn-glycerol 3-phosphate (G3P), the key precursor for phospholipid synthesis. This chain is Glycerol-3-phosphate dehydrogenase [NAD(P)+], found in Burkholderia mallei (strain NCTC 10247).